A 276-amino-acid polypeptide reads, in one-letter code: NH(3)-dependent NAD(+) synthetase (276 aa).

43 to 50 contributes to the ATP binding site; the sequence is GISGGVDS. Residue D49 participates in Mg(2+) binding. R146 is a binding site for deamido-NAD(+). T166 is an ATP binding site. Residue E171 coordinates Mg(2+). The deamido-NAD(+) site is built by K179 and D186. ATP is bound by residues K195 and T217. Residue 266–267 participates in deamido-NAD(+) binding; it reads HK.

This sequence belongs to the NAD synthetase family. In terms of assembly, homodimer.

The enzyme catalyses deamido-NAD(+) + NH4(+) + ATP = AMP + diphosphate + NAD(+) + H(+). Its pathway is cofactor biosynthesis; NAD(+) biosynthesis; NAD(+) from deamido-NAD(+) (ammonia route): step 1/1. Functionally, catalyzes the ATP-dependent amidation of deamido-NAD to form NAD. Uses ammonia as a nitrogen source. The protein is NH(3)-dependent NAD(+) synthetase of Vibrio parahaemolyticus serotype O3:K6 (strain RIMD 2210633).